Here is a 468-residue protein sequence, read N- to C-terminus: ATP synthase subunit beta (468 aa).

Residue 155–162 (GGAGVGKT) participates in ATP binding.

This sequence belongs to the ATPase alpha/beta chains family. F-type ATPases have 2 components, CF(1) - the catalytic core - and CF(0) - the membrane proton channel. CF(1) has five subunits: alpha(3), beta(3), gamma(1), delta(1), epsilon(1). CF(0) has three main subunits: a(1), b(2) and c(9-12). The alpha and beta chains form an alternating ring which encloses part of the gamma chain. CF(1) is attached to CF(0) by a central stalk formed by the gamma and epsilon chains, while a peripheral stalk is formed by the delta and b chains.

Its subcellular location is the cell membrane. It carries out the reaction ATP + H2O + 4 H(+)(in) = ADP + phosphate + 5 H(+)(out). Functionally, produces ATP from ADP in the presence of a proton gradient across the membrane. The catalytic sites are hosted primarily by the beta subunits. This Streptococcus agalactiae serotype Ia (strain ATCC 27591 / A909 / CDC SS700) protein is ATP synthase subunit beta.